Reading from the N-terminus, the 452-residue chain is MGRLFGTDGVRGVANADLTAELALGLSVAAAHVLAEAGTFAGHRATAVVGRDPRASGEFLEAAVVAGLASAGVDVLRVGVLPTPAVAHLTGALGADLGVMLSASHNAMPDNGIKFFARGGHKLADELEDRIESVYADHRTGAPWDRPTGSGVGRVRDYDEGLDQYVAHLVGVLPNRLDGLKIVLDEAHGAASRVSPEAFARAGAELVTIGAVPDGLNINDGCGSTHLDLLKAAVVEHGADLGIAHDGDADRCLAVDHTGAEVDGDQILAVLALAMREREALRSDTVVATVMSNLGFKLAMEREGIRFVQTGVGDRYVLEEMKEHGYALGGEQSGHVIILDHATTGDGTLTGLMLAARVAQTGRTLRDLASVMERLPQVLVNVPDVDKSRVTSSAELATAVAEAERELGSTGRVLLRPSGTEPLVRVMVEAADIEQARSVAGRLADSVKSALG.

Ser104 acts as the Phosphoserine intermediate in catalysis. 4 residues coordinate Mg(2+): Ser104, Asp246, Asp248, and Asp250. At Ser104 the chain carries Phosphoserine.

It belongs to the phosphohexose mutase family. Mg(2+) serves as cofactor. Post-translationally, activated by phosphorylation.

The catalysed reaction is alpha-D-glucosamine 1-phosphate = D-glucosamine 6-phosphate. In terms of biological role, catalyzes the conversion of glucosamine-6-phosphate to glucosamine-1-phosphate. This chain is Phosphoglucosamine mutase, found in Streptomyces coelicolor (strain ATCC BAA-471 / A3(2) / M145).